The primary structure comprises 146 residues: Small ribosomal subunit protein uS9z (146 aa).

It belongs to the universal ribosomal protein uS9 family.

The chain is Small ribosomal subunit protein uS9z (RPS16A) from Arabidopsis thaliana (Mouse-ear cress).